We begin with the raw amino-acid sequence, 382 residues long: N-acetyldiaminopimelate deacetylase (382 aa).

The active site involves Asp73. The active-site Proton acceptor is Glu132.

The protein belongs to the peptidase M20A family. N-acetyldiaminopimelate deacetylase subfamily.

It carries out the reaction N-acetyl-(2S,6S)-2,6-diaminopimelate + H2O = (2S,6S)-2,6-diaminopimelate + acetate. It participates in amino-acid biosynthesis; L-lysine biosynthesis via DAP pathway; LL-2,6-diaminopimelate from (S)-tetrahydrodipicolinate (acetylase route): step 3/3. Its function is as follows. Catalyzes the conversion of N-acetyl-diaminopimelate to diaminopimelate and acetate. The protein is N-acetyldiaminopimelate deacetylase of Oenococcus oeni (strain ATCC BAA-331 / PSU-1).